A 693-amino-acid polypeptide reads, in one-letter code: UvrABC system protein B (693 aa).

The Helicase ATP-binding domain occupies 35–188; it reads ERIKNGEKDV…DDLLRKFVSM (154 aa). Residue 48 to 55 coordinates ATP; the sequence is GATGTGKS. The Beta-hairpin motif lies at 101 to 124; the sequence is YYDYYQPEAYVAQTDTFIEKDSSV. The Helicase C-terminal domain occupies 438-604; that stretch reads QIDDLLGEIK…PLRKKIADIT (167 aa). The UVR domain occupies 648–683; sequence VGLIEQLTEQMHAAAGELQFELAARLRDEVGELKKE.

It belongs to the UvrB family. In terms of assembly, forms a heterotetramer with UvrA during the search for lesions. Interacts with UvrC in an incision complex.

It localises to the cytoplasm. Functionally, the UvrABC repair system catalyzes the recognition and processing of DNA lesions. A damage recognition complex composed of 2 UvrA and 2 UvrB subunits scans DNA for abnormalities. Upon binding of the UvrA(2)B(2) complex to a putative damaged site, the DNA wraps around one UvrB monomer. DNA wrap is dependent on ATP binding by UvrB and probably causes local melting of the DNA helix, facilitating insertion of UvrB beta-hairpin between the DNA strands. Then UvrB probes one DNA strand for the presence of a lesion. If a lesion is found the UvrA subunits dissociate and the UvrB-DNA preincision complex is formed. This complex is subsequently bound by UvrC and the second UvrB is released. If no lesion is found, the DNA wraps around the other UvrB subunit that will check the other stand for damage. This is UvrABC system protein B from Arthrobacter sp. (strain FB24).